We begin with the raw amino-acid sequence, 285 residues long: Release factor glutamine methyltransferase (285 aa).

Residues 124–128, D147, and N190 each bind S-adenosyl-L-methionine; that span reads GTGSG. Substrate is bound at residue 190–193; that stretch reads NPPY.

The protein belongs to the protein N5-glutamine methyltransferase family. PrmC subfamily.

It carries out the reaction L-glutaminyl-[peptide chain release factor] + S-adenosyl-L-methionine = N(5)-methyl-L-glutaminyl-[peptide chain release factor] + S-adenosyl-L-homocysteine + H(+). Functionally, methylates the class 1 translation termination release factors RF1/PrfA and RF2/PrfB on the glutamine residue of the universally conserved GGQ motif. The sequence is that of Release factor glutamine methyltransferase from Flavobacterium psychrophilum (strain ATCC 49511 / DSM 21280 / CIP 103535 / JIP02/86).